A 338-amino-acid chain; its full sequence is Homocysteine S-methyltransferase 3 (338 aa).

A Hcy-binding domain is found at 12–326 (AVRRWVDAAG…NTIRAIHRTL (315 aa)). The Zn(2+) site is built by Cys244, Cys311, and Cys312.

Monomer. Requires Zn(2+) as cofactor.

It carries out the reaction S-methyl-L-methionine + L-homocysteine = 2 L-methionine + H(+). Its function is as follows. Catalyzes methyl transfer from S-methylmethionine (SMM) to adenosyl-L-homocysteine (AdoMet). SMM degradation (by HMT-1, HMT-2, HMT-3 and HMT-4) and biosynthesis (by MMT1) constitute the SMM cycle in plants, which is probably required to achieve short term control of AdoMet level. This chain is Homocysteine S-methyltransferase 3 (HMT-3), found in Zea mays (Maize).